The primary structure comprises 1012 residues: DNA polymerase catalytic subunit (1012 aa).

A disordered region spans residues 1–31; that stretch reads MDFFNPFIDPTRGGPRNTVRQPTPSQSPTVP. Positions 21–31 are enriched in low complexity; it reads QPTPSQSPTVP.

Belongs to the DNA polymerase type-B family. In terms of assembly, forms a complex with the ssDNA-binding protein, the DNA polymerase processivity factor, and the alkaline exonuclease. Interacts with the putative helicase-primase complex subunit; this interaction may coordinate leading and lagging strand DNA synthesis at the replication fork.

The protein resides in the host nucleus. The catalysed reaction is DNA(n) + a 2'-deoxyribonucleoside 5'-triphosphate = DNA(n+1) + diphosphate. The enzyme catalyses Endonucleolytic cleavage to 5'-phosphomonoester.. Functionally, replicates viral genomic DNA. The replication complex is composed of six viral proteins: the DNA polymerase, processivity factor, primase, primase-associated factor, helicase, and ssDNA-binding protein. Additionally, the polymerase contains an intrinsic ribonuclease H (RNase H) activity that specifically degrades RNA/DNA heteroduplexes or duplex DNA substrates in the 5' to 3' direction. Therefore, it can catalyze the excision of the RNA primers that initiate the synthesis of Okazaki fragments at a replication fork during viral DNA replication. In Human herpesvirus 8 type P (isolate GK18) (HHV-8), this protein is DNA polymerase catalytic subunit (ORF9).